A 593-amino-acid chain; its full sequence is Double-stranded RNA-binding protein 2 (593 aa).

2 DRBM domains span residues 1 to 70 (MYKN…ELSK) and 87 to 155 (IYKN…ELKQ). The span at 188 to 197 (LNQTNGGKTP) shows a compositional bias: polar residues. Disordered regions lie at residues 188-221 (LNQTNGGKTPQQKEKQQSSNRPSSRRPSYPKSNA), 357-408 (APDF…ESNQ), and 546-593 (VNSS…KLHI). The span at 205 to 219 (SSNRPSSRRPSYPKS) shows a compositional bias: low complexity. Residues 378-408 (ESSPASEQESKSHTASSSATRSPSQQLESNQ) show a composition bias toward polar residues. Over residues 572–586 (RTNTSDTSNAATASS) the composition is skewed to low complexity.

Its function is as follows. Binds double-stranded RNA. The protein is Double-stranded RNA-binding protein 2 (DRB2) of Oryza sativa subsp. japonica (Rice).